The primary structure comprises 549 residues: Peptide transport periplasmic protein SapA (549 aa).

An N-terminal signal peptide occupies residues 1 to 21; the sequence is MRLVLSSLIVIAGLLSSQATA.

Belongs to the bacterial solute-binding protein 5 family.

It is found in the periplasm. Involved in a peptide intake transport system that plays a role in the resistance to antimicrobial peptides. The sequence is that of Peptide transport periplasmic protein SapA from Salmonella typhimurium (strain LT2 / SGSC1412 / ATCC 700720).